Reading from the N-terminus, the 1139-residue chain is Autophagy-related protein 23 (1139 aa).

Disordered stretches follow at residues 1–148 (MFQR…EMSP), 225–327 (STDK…YDDE), 356–388 (LTTA…SVKD), 475–569 (KNEK…DTAG), 648–674 (KKIS…KTEY), 720–767 (RQES…RETE), 786–828 (EDAQ…SKLR), 935–961 (AAVE…TEDL), and 977–1012 (HERD…ELRT). Basic and acidic residues predominate over residues 7–18 (SAIDRTIAEEQA). The segment covering 19–37 (RQQTATQSRSPSRTGSTSS) has biased composition (low complexity). 2 coiled-coil regions span residues 142 to 170 (KLQE…LLRS) and 215 to 259 (DMVM…STDQ). Basic and acidic residues-rich tracts occupy residues 225 to 247 (STDK…KLEE), 261 to 273 (KTSD…DAQD), 373 to 385 (ATRE…DVAS), and 475 to 494 (KNEK…KLES). A coiled-coil region spans residues 323–495 (SYDDEIPQLQ…TDLTKKLESK (173 aa)). Low complexity predominate over residues 496 to 522 (PAPAMLTPAATPMPTVLQPAATSATAA). Over residues 526–537 (GKKKNNKKKKGK) the composition is skewed to basic residues. The stretch at 566–1067 (DTAGNAELKA…AAQTKLVASS (502 aa)) forms a coiled coil. The span at 651 to 661 (SSSTSDAEASS) shows a compositional bias: low complexity. Basic and acidic residues-rich tracts occupy residues 728–767 (ATKE…RETE), 786–815 (EDAQ…KAEQ), 935–945 (AAVEERDRIED), and 977–1011 (HERD…DELR). The GRIP domain maps to 1082 to 1132 (SPAGAPDTVYLKTILLQFLEQKDTKLRAQLVPVLGKLLRFDKTDEQKWQKA).

This sequence belongs to the ATG23 family. Forms a complex with ATG9 and ATG27.

The protein localises to the cytoplasm. It localises to the preautophagosomal structure membrane. Its function is as follows. Required for cytoplasm to vacuole transport (Cvt) vesicle formation and efficient autophagy. Plays a role in ATG protein retrieval from the pre-autophagosomal structure (PAS) and is especially required for autophagy-dependent cycling of ATG9. Autophagy is required for proper vegetative growth, asexual/sexual reproduction, and full virulence. Autophagy is particularly involved in the biosynthesis of deoxynivalenol (DON), an important virulence determinant. This is Autophagy-related protein 23 from Gibberella zeae (strain ATCC MYA-4620 / CBS 123657 / FGSC 9075 / NRRL 31084 / PH-1) (Wheat head blight fungus).